Here is a 50-residue protein sequence, read N- to C-terminus: Monellin chain B (50 aa).

As to quaternary structure, heterodimer of an A chain and a B chain.

In terms of biological role, taste-modifying protein; intensely sweet-tasting protein. This Dioscoreophyllum cumminsii (Serendipity berry) protein is Monellin chain B.